Here is a 164-residue protein sequence, read N- to C-terminus: Dehydrin Rab16C (164 aa).

The span at 42–51 (MGGHHAGAGG) shows a compositional bias: gly residues. Positions 42 to 164 (MGGHHAGAGG…KIKEKLPGQH (123 aa)) are disordered. The span at 105 to 115 (GNNHQQQQMMG) shows a compositional bias: low complexity. Residues 128 to 138 (GMTGAGTGTGV) show a composition bias toward gly residues. Residues 147 to 164 (GEKKGFMDKIKEKLPGQH) show a composition bias toward basic and acidic residues.

Belongs to the plant dehydrin family.

This is Dehydrin Rab16C (RAB16C) from Oryza sativa subsp. indica (Rice).